Here is a 487-residue protein sequence, read N- to C-terminus: Anthocyanidin 3-O-glucosyltransferase 5 (487 aa).

The Proton acceptor role is filled by H22. H22 serves as a coordination point for an anthocyanidin. D119 serves as the catalytic Charge relay. Q354, H369, W372, N373, S374, and E377 together coordinate UDP-alpha-D-glucose. Position 392 (A392) interacts with an anthocyanidin. E393 and Q394 together coordinate UDP-alpha-D-glucose.

Belongs to the UDP-glycosyltransferase family. In terms of tissue distribution, faintly expressed in cotyledons.

The enzyme catalyses an anthocyanidin + UDP-alpha-D-glucose + H(+) = an anthocyanidin 3-O-beta-D-glucoside + UDP. Its pathway is pigment biosynthesis; anthocyanin biosynthesis. In terms of biological role, in the presence of other necessary color factors, this glycosylation reaction allows the accumulation of anthocyanin pigments. This is Anthocyanidin 3-O-glucosyltransferase 5 (GT5) from Manihot esculenta (Cassava).